The sequence spans 294 residues: Nucleotide-binding protein CLD_1131 (294 aa).

Gly-8–Thr-15 contacts ATP. GTP is bound at residue Asp-59–Gly-62.

The protein belongs to the RapZ-like family.

Functionally, displays ATPase and GTPase activities. The chain is Nucleotide-binding protein CLD_1131 from Clostridium botulinum (strain Okra / Type B1).